The chain runs to 2313 residues: Histone-lysine N-methyltransferase Set2 (2313 aa).

Disordered regions lie at residues 1-115 (MEES…ASTS), 179-442 (AVGG…EETF), 550-858 (EPPL…LKAK), 883-1106 (RLDE…KKAL), 1118-1150 (ETES…PFGD), and 1163-1251 (KRDK…SQGR). The segment at residues 17-29 (GRGRGRPPKVALS) is a DNA-binding region (a.T hook 1). A compositionally biased stretch (basic and acidic residues) spans 73–82 (IKFDVRDLLN). Positions 101-115 (STGHSQSGTTAASTS) are enriched in low complexity. Residues 197-209 (PRKRGRPRKSQLA) constitute a DNA-binding region (a.T hook 2). Positions 221–241 (SCSDSDTNSTSTTTSNMSSDS) are enriched in low complexity. Residues 252 to 265 (PKSKLRVSLKRLKL) show a composition bias toward basic residues. A compositionally biased stretch (low complexity) spans 266 to 288 (GGRLESSDSGNSPSSSSPEVEPP). The segment covering 330 to 345 (ESPKGEEEQEEGRPVE) has biased composition (basic and acidic residues). Acidic residues-rich tracts occupy residues 347–356 (EPQDLIDIDM), 365–375 (PDPEEDLDEIM), and 388–398 (ADDEAEEEEDA). Threonine 404 is subject to Phosphothreonine. Over residues 412-433 (ADSCSSAPRRSRRSAPLSGSSR) the composition is skewed to low complexity. The segment covering 552 to 563 (PLKDESDPKQTE) has biased composition (basic and acidic residues). Positions 659–671 (EDYESNQEQVAED) are enriched in acidic residues. Residues 676 to 685 (CNNQKGQKQT) show a composition bias toward polar residues. Composition is skewed to basic and acidic residues over residues 689 to 708 (EMKE…EKAM), 719 to 732 (VDKK…EKKV), 740 to 749 (VPEKKMDSKK), and 758 to 782 (KQKE…KSSA). Phosphoserine occurs at positions 786 and 788. Polar residues-rich tracts occupy residues 800–833 (AQWS…SNQP), 918–928 (KSLSGKTSLRR), and 938–955 (LERN…NTSA). Residues 959 to 969 (KPSKVKKKINP) show a composition bias toward basic residues. The segment covering 997 to 1010 (SSPVSTSSDSSSKR) has biased composition (low complexity). Over residues 1016 to 1039 (TTSDLDGGSKLDQRRYTICEDRQP) the composition is skewed to basic and acidic residues. 2 stretches are compositionally biased toward low complexity: residues 1085-1097 (SRQN…SSAS) and 1118-1127 (ETESSESTSS). A compositionally biased stretch (basic and acidic residues) spans 1163 to 1183 (KRDKVDEDQRKEGQDEVKREA). Residues 1199-1213 (TPATTPTPSPTQSNP) show a composition bias toward low complexity. Residues 1307–1360 (NAEMQCDCFLTGDEEAQGHLSCGAGCINRMLMIECGPLCSNGARCTNKRFQQHQ) form the AWS domain. Residues cysteine 1312, cysteine 1314, cysteine 1328, cysteine 1332, cysteine 1341, cysteine 1345, and cysteine 1351 each contribute to the Zn(2+) site. Residues 1362-1479 (WPCRVFRTEK…PGEEITFDYQ (118 aa)) enclose the SET domain. Residues 1415 to 1417 (HYY) and 1440 to 1441 (NH) each bind S-adenosyl-L-methionine. Cysteine 1443 contributes to the Zn(2+) binding site. Residues 1486-1502 (DAQRCYCEAANCRGWIG) enclose the Post-SET domain. Residue glutamine 1488 participates in S-adenosyl-L-methionine binding. A Zn(2+)-binding site is contributed by cysteine 1490. Tyrosine 1491 lines the S-adenosyl-L-methionine pocket. Residues cysteine 1492 and cysteine 1497 each contribute to the Zn(2+) site. Disordered stretches follow at residues 1501 to 1598 (IGGE…KPKV) and 1763 to 1860 (MKEH…RRTL). The segment covering 1505–1534 (PDSDEGEQLDEESDSDAEMDEEELEAEPEE) has biased composition (acidic residues). Residues 1539–1551 (KSAKAKAKSKLKA) show a composition bias toward basic residues. Basic and acidic residues-rich tracts occupy residues 1564 to 1574 (QTKPKDREYKA), 1763 to 1774 (MKEHEREADRQQ), and 1784 to 1806 (EDQR…RDTT). Over residues 1817-1832 (SGNNTICTITTQQKGS) the composition is skewed to polar residues. The span at 1840–1860 (TRNDNRRRSDIGPPSEQRRTL) shows a compositional bias: basic and acidic residues. The region spanning 1963–1996 (DPLPPAWNWQVTSDGDIYYYNLRERISQWEPPSP) is the WW domain. 2 positions are modified to phosphoserine: serine 2130 and serine 2131. The disordered stretch occupies residues 2177–2218 (LGTVGKRKLPMPPSVTVKKHRQEQRSKKVKSSQSPLTATSAR). Over residues 2193-2206 (VKKHRQEQRSKKVK) the composition is skewed to basic residues. Residues 2207–2216 (SSQSPLTATS) show a composition bias toward polar residues.

It belongs to the class V-like SAM-binding methyltransferase superfamily. Histone-lysine methyltransferase family. SET2 subfamily. Interacts with (phosphorylated) Polr2A.

The protein resides in the nucleus. It localises to the chromosome. It carries out the reaction L-lysyl(36)-[histone H3] + 3 S-adenosyl-L-methionine = N(6),N(6),N(6)-trimethyl-L-lysyl(36)-[histone H3] + 3 S-adenosyl-L-homocysteine + 3 H(+). Functionally, histone methyltransferase that specifically trimethylates 'Lys-36' of histone H3 (H3K36me3). Represents the main enzyme generating H3K36me3, a specific tag for epigenetic transcriptional activation. Involved in dosage compensation in males (X chromosome dosage compensation) by mediating formation of H3K36me3, a mark recognized by msl-3 component of the MSL complex. In addition to its role in dosage compensation in males, promotes germline stem cell differentiation in females: catalyzes formation of H3K36me3, promoting recruitment of msl-3 and subsequent recruitment of the ATAC complex, leading to transcription of genes, such as RpS19b. This chain is Histone-lysine N-methyltransferase Set2, found in Drosophila melanogaster (Fruit fly).